A 133-amino-acid chain; its full sequence is Large ribosomal subunit protein bL20 (133 aa).

It belongs to the bacterial ribosomal protein bL20 family.

In terms of biological role, binds directly to 23S ribosomal RNA and is necessary for the in vitro assembly process of the 50S ribosomal subunit. It is not involved in the protein synthesizing functions of that subunit. The chain is Large ribosomal subunit protein bL20 from Bartonella henselae (strain ATCC 49882 / DSM 28221 / CCUG 30454 / Houston 1) (Rochalimaea henselae).